The primary structure comprises 342 residues: NLP effector protein Pc107869 (342 aa).

An N-terminal signal peptide occupies residues Met1–Ala19. Asn24 is a glycosylation site (N-linked (GlcNAc...) asparagine). Residues Ala41–Ala125 form a disordered region. A compositionally biased stretch (low complexity) spans Gln55–Pro75. Over residues Thr93–Gly121 the composition is skewed to pro residues. Positions Gly226–Glu232 match the Hepta-peptide GHRHDWE motif motif.

It belongs to the Necrosis inducing protein (NPP1) family.

Its subcellular location is the secreted. Its function is as follows. Secreted effector that contributes strongly to virulence during infection by P.capsici. Induces cell death in the Solanaceae, including Nicotiana benthamiana. In Phytophthora capsici, this protein is NLP effector protein Pc107869.